The sequence spans 77 residues: Coiled-coil-helix-coiled-coil-helix domain-containing protein C550.01c (77 aa).

The CHCH domain maps to 24 to 65 (KGGCVEEHLRLNDCYWDTHDWRKCTEQMEEFRKCWEKRHGPL). 2 short sequence motifs (cx9C motif) span residues 27 to 37 (CVEEHLRLNDC) and 47 to 57 (CTEQMEEFRKC). 2 disulfides stabilise this stretch: Cys27–Cys57 and Cys37–Cys47.

The protein localises to the cytoplasm. Its subcellular location is the nucleus. The polypeptide is Coiled-coil-helix-coiled-coil-helix domain-containing protein C550.01c (Schizosaccharomyces pombe (strain 972 / ATCC 24843) (Fission yeast)).